The primary structure comprises 300 residues: Formyltetrahydrofolate deformylase (300 aa).

The ACT domain maps to arginine 21–glutamate 102. The active site involves aspartate 244.

This sequence belongs to the PurU family.

The catalysed reaction is (6R)-10-formyltetrahydrofolate + H2O = (6S)-5,6,7,8-tetrahydrofolate + formate + H(+). It participates in purine metabolism; IMP biosynthesis via de novo pathway; formate from 10-formyl-5,6,7,8-tetrahydrofolate: step 1/1. Its function is as follows. Catalyzes the hydrolysis of 10-formyltetrahydrofolate (formyl-FH4) to formate and tetrahydrofolate (FH4). The polypeptide is Formyltetrahydrofolate deformylase (Bacillus subtilis (strain 168)).